Reading from the N-terminus, the 134-residue chain is MRHRNSGRQLSRNSAHRKATLQNMTASLFRHEVIKTTLPKAKELRRVAEPLITLAKVDNVHKRRVAFARLRDKEMVGKLFQELGPRYQTRPGGYMRILKCGNRPGDNAPMAFVELVDRPELTEEAPAVESAKEE.

The protein belongs to the bacterial ribosomal protein bL17 family. Part of the 50S ribosomal subunit. Contacts protein L32.

This Thioalkalivibrio sulfidiphilus (strain HL-EbGR7) protein is Large ribosomal subunit protein bL17.